The following is a 260-amino-acid chain: Thrombin-like enzyme 1 (260 aa).

The first 18 residues, 1–18 (MVLITVLANLLILQLSYA), serve as a signal peptide directing secretion. The propeptide occupies 19–24 (QKSSEL). Residues 25–251 (VIGGDECNIN…HLDWIQSIIA (227 aa)) enclose the Peptidase S1 domain. 6 disulfide bridges follow: Cys-31-Cys-165, Cys-52-Cys-68, Cys-102-Cys-258, Cys-144-Cys-212, Cys-176-Cys-191, and Cys-202-Cys-227. His-67 functions as the Charge relay system in the catalytic mechanism. Asn-105 carries N-linked (GlcNAc...) asparagine glycosylation. The active-site Charge relay system is Asp-112. N-linked (GlcNAc...) asparagine glycans are attached at residues Asn-156 and Asn-172. Residue Ser-206 is the Charge relay system of the active site. Asn-253 is a glycosylation site (N-linked (GlcNAc...) asparagine).

Belongs to the peptidase S1 family. Snake venom subfamily. Monomer. As to expression, expressed by the venom gland.

The protein resides in the secreted. Thrombin-like snake venom serine protease. The protein is Thrombin-like enzyme 1 of Trimeresurus albolabris (White-lipped pit viper).